Consider the following 361-residue polypeptide: Biotin synthase (361 aa).

One can recognise a Radical SAM core domain in the interval 47–278 (VHGDEVALCG…AAHIFVMGGR (232 aa)). 3 residues coordinate [4Fe-4S] cluster: Cys-65, Cys-69, and Cys-72. [2Fe-2S] cluster contacts are provided by Ser-110, Cys-143, and Cys-203. Residues 323-361 (TLRPPDTGKPWAFDGHAPSDADWNRKAAEPRPRPLPVVR) are disordered. Residues 339–354 (APSDADWNRKAAEPRP) show a composition bias toward basic and acidic residues.

It belongs to the radical SAM superfamily. Biotin synthase family. In terms of assembly, homodimer. It depends on [4Fe-4S] cluster as a cofactor. [2Fe-2S] cluster serves as cofactor.

It catalyses the reaction (4R,5S)-dethiobiotin + (sulfur carrier)-SH + 2 reduced [2Fe-2S]-[ferredoxin] + 2 S-adenosyl-L-methionine = (sulfur carrier)-H + biotin + 2 5'-deoxyadenosine + 2 L-methionine + 2 oxidized [2Fe-2S]-[ferredoxin]. The protein operates within cofactor biosynthesis; biotin biosynthesis; biotin from 7,8-diaminononanoate: step 2/2. Functionally, catalyzes the conversion of dethiobiotin (DTB) to biotin by the insertion of a sulfur atom into dethiobiotin via a radical-based mechanism. This is Biotin synthase from Anaeromyxobacter sp. (strain K).